The following is a 516-amino-acid chain: MGDPSKQDILTIFKRLRSVPTNKVCFDCGAKNPSWASITYGVFLCIDCSGSHRSLGVHLSFIRSTELDSNWSWFQLRCMQVGGNANASSFFHQHGCSTNDTNAKYNSRAAQLYREKIKSLASQATRKHGTDLWLDSCVVPPLSPPPKEEDFFASHVSPEVSDTAWASAIAEPSSLTSRPAETTLENNEGGQEQGPCVEGLNVPTKATLEVSSIIKKKPNQAKKGLGAKKRSLGAQKLANTCFNEIEKQAQAADKMKEQEDLAKAAPKEESIVSSLRLAYKDLEIQMKKDEKMNISGKKNVDSDRLGMGFGNCRSGISHSVTSDMQTIEQESPIMAKPRKKYNDDGDDSYFTSSSRYFDEPVELRSGSFSSWDDSSDSYWKKETSKDTETVLKTTGYSDRPTARHKPDYEPVENTDEAQKKFGNVKAISSDMYFGRQAQADYETRARLERLSASSSISSADLFEEQRKQAAGNYSLSSVLPNAPDMAQFKQGVRSVAGKLSVFANGVVTSIQDRYGS.

An Arf-GAP domain is found at 10–126 (LTIFKRLRSV…IKSLASQATR (117 aa)). The C4-type zinc finger occupies 25–48 (CFDCGAKNPSWASITYGVFLCIDC). A disordered region spans residues 170-199 (AEPSSLTSRPAETTLENNEGGQEQGPCVEG). The span at 173–190 (SSLTSRPAETTLENNEGG) shows a compositional bias: polar residues. Residue Ser231 is modified to Phosphoserine. Residues 243–264 (NEIEKQAQAADKMKEQEDLAKA) are a coiled coil. Ser270, Ser274, Ser331, and Ser370 each carry phosphoserine. Residues 393–417 (TTGYSDRPTARHKPDYEPVENTDEA) are disordered. Ser428, Ser451, Ser453, Ser455, Ser457, and Ser458 each carry phosphoserine.

It localises to the cytoplasm. It is found in the golgi apparatus membrane. GAP activity stimulated by phosphatidylinositol 4,5-bisphosphate (PIP2). GTPase-activating protein (GAP) for ADP ribosylation factor 1 (ARF1). Hydrolysis of ARF1-bound GTP may lead to dissociation of coatomer from Golgi-derived membranes to allow fusion with target membranes. This is ADP-ribosylation factor GTPase-activating protein 3 from Pongo abelii (Sumatran orangutan).